The following is a 328-amino-acid chain: Coiled-coil domain-containing protein 54 (328 aa).

The stretch at 122–151 (TTKDILSMKEDIKALKKKVTELEKQNSYSR) forms a coiled coil. Thr-182 bears the Phosphothreonine mark. The segment covering 186 to 197 (TDREMSSAEPEK) has biased composition (basic and acidic residues). The disordered stretch occupies residues 186-205 (TDREMSSAEPEKVPSYPKST).

The chain is Coiled-coil domain-containing protein 54 (CCDC54) from Macaca fascicularis (Crab-eating macaque).